The following is a 380-amino-acid chain: Histidinol-phosphate aminotransferase (380 aa).

Position 235 is an N6-(pyridoxal phosphate)lysine (Lys235).

Belongs to the class-II pyridoxal-phosphate-dependent aminotransferase family. Histidinol-phosphate aminotransferase subfamily. As to quaternary structure, homodimer. Requires pyridoxal 5'-phosphate as cofactor.

It catalyses the reaction L-histidinol phosphate + 2-oxoglutarate = 3-(imidazol-4-yl)-2-oxopropyl phosphate + L-glutamate. Its pathway is amino-acid biosynthesis; L-histidine biosynthesis; L-histidine from 5-phospho-alpha-D-ribose 1-diphosphate: step 7/9. This chain is Histidinol-phosphate aminotransferase, found in Rhodococcus opacus (strain B4).